The primary structure comprises 308 residues: tRNA dimethylallyltransferase 1 (308 aa).

9–16 serves as a coordination point for ATP; it reads GPTGVGKT. Position 11–16 (11–16) interacts with substrate; it reads TGVGKT. The interval 34–37 is interaction with substrate tRNA; that stretch reads DSRQ.

Belongs to the IPP transferase family. As to quaternary structure, monomer. It depends on Mg(2+) as a cofactor.

The enzyme catalyses adenosine(37) in tRNA + dimethylallyl diphosphate = N(6)-dimethylallyladenosine(37) in tRNA + diphosphate. Catalyzes the transfer of a dimethylallyl group onto the adenine at position 37 in tRNAs that read codons beginning with uridine, leading to the formation of N6-(dimethylallyl)adenosine (i(6)A). This chain is tRNA dimethylallyltransferase 1, found in Bacteroides thetaiotaomicron (strain ATCC 29148 / DSM 2079 / JCM 5827 / CCUG 10774 / NCTC 10582 / VPI-5482 / E50).